The following is a 418-amino-acid chain: Probable serine/threonine-protein kinase DDB_G0280461 (418 aa).

Positions 14–271 constitute a Protein kinase domain; the sequence is KIEENEFSKG…IVQTLDQLAI (258 aa). ATP is bound by residues 20–28 and K41; that span reads FSKGSFAKV. D139 (proton acceptor) is an active-site residue. Disordered stretches follow at residues 327–356 and 377–418; these read NNNN…NNNN and SVNS…CLIN. The span at 377–402 shows a compositional bias: low complexity; the sequence is SVNSSFSNSSLGSNGSNSSGTSTSSG. The segment covering 403–418 has biased composition (basic residues); sequence GKKRSQKRKSWKCLIN.

This sequence belongs to the protein kinase superfamily. TKL Ser/Thr protein kinase family.

The enzyme catalyses L-seryl-[protein] + ATP = O-phospho-L-seryl-[protein] + ADP + H(+). The catalysed reaction is L-threonyl-[protein] + ATP = O-phospho-L-threonyl-[protein] + ADP + H(+). The chain is Probable serine/threonine-protein kinase DDB_G0280461 from Dictyostelium discoideum (Social amoeba).